The chain runs to 109 residues: MQRIKKGDKVVIIAGKHKQKTGIVLQVFVKEQRAIVEGINMVKRHTKENAQNQKGGIIEKEAPIHLSNLALLDHKAKDVRPVKVKYGTDPKTNKKVRLSRKTNNLVGGQ.

The segment at 85–109 (KYGTDPKTNKKVRLSRKTNNLVGGQ) is disordered.

This sequence belongs to the universal ribosomal protein uL24 family. As to quaternary structure, part of the 50S ribosomal subunit.

Functionally, one of two assembly initiator proteins, it binds directly to the 5'-end of the 23S rRNA, where it nucleates assembly of the 50S subunit. In terms of biological role, one of the proteins that surrounds the polypeptide exit tunnel on the outside of the subunit. The protein is Large ribosomal subunit protein uL24 of Mycoplasmoides gallisepticum (strain R(low / passage 15 / clone 2)) (Mycoplasma gallisepticum).